The following is a 106-amino-acid chain: UPF0145 protein PFL_3418 (106 aa).

The protein belongs to the UPF0145 family.

This Pseudomonas fluorescens (strain ATCC BAA-477 / NRRL B-23932 / Pf-5) protein is UPF0145 protein PFL_3418.